Reading from the N-terminus, the 151-residue chain is Large ribosomal subunit protein bL9 (151 aa).

Belongs to the bacterial ribosomal protein bL9 family.

Its function is as follows. Binds to the 23S rRNA. The chain is Large ribosomal subunit protein bL9 from Prochlorococcus marinus (strain MIT 9515).